Consider the following 227-residue polypeptide: Ribose-5-phosphate isomerase A (227 aa).

Substrate contacts are provided by residues 26-29, 82-85, and 95-98; these read TGST, DGAD, and KGGG. Catalysis depends on Glu104, which acts as the Proton acceptor. Lys122 provides a ligand contact to substrate.

Belongs to the ribose 5-phosphate isomerase family. In terms of assembly, homodimer.

The enzyme catalyses aldehydo-D-ribose 5-phosphate = D-ribulose 5-phosphate. Its pathway is carbohydrate degradation; pentose phosphate pathway; D-ribose 5-phosphate from D-ribulose 5-phosphate (non-oxidative stage): step 1/1. In terms of biological role, catalyzes the reversible conversion of ribose-5-phosphate to ribulose 5-phosphate. This is Ribose-5-phosphate isomerase A from Streptococcus pyogenes serotype M2 (strain MGAS10270).